Consider the following 248-residue polypeptide: Probable transcriptional regulatory protein Ccel_0181 (248 aa).

The protein belongs to the TACO1 family.

The protein localises to the cytoplasm. This chain is Probable transcriptional regulatory protein Ccel_0181, found in Ruminiclostridium cellulolyticum (strain ATCC 35319 / DSM 5812 / JCM 6584 / H10) (Clostridium cellulolyticum).